The primary structure comprises 171 residues: Translation initiation factor IF-3 (171 aa).

It belongs to the IF-3 family. In terms of assembly, monomer.

It localises to the cytoplasm. In terms of biological role, IF-3 binds to the 30S ribosomal subunit and shifts the equilibrium between 70S ribosomes and their 50S and 30S subunits in favor of the free subunits, thus enhancing the availability of 30S subunits on which protein synthesis initiation begins. The sequence is that of Translation initiation factor IF-3 from Listeria innocua serovar 6a (strain ATCC BAA-680 / CLIP 11262).